The sequence spans 794 residues: FT-interacting protein 1 (794 aa).

Over residues 1–27 the composition is skewed to basic and acidic residues; that stretch reads MAAKDGAKSQEDYKLKDMKPELGERWP. Residues 1–34 form a disordered region; sequence MAAKDGAKSQEDYKLKDMKPELGERWPHGGQRGG. C2 domains lie at 37–158, 198–321, and 364–492; these read WIGS…PQWY, VQGE…SKWY, and YISD…THSY. Ca(2+) is bound by residues D76, D123, E125, and E131. 4 consecutive transmembrane segments (helical) span residues 510–532, 595–615, 619–639, and 737–757; these read LAVR…PLLP, IVSV…VCYW, LTTI…ELIL, and LFVI…FKII.

This sequence belongs to the MCTP family. In terms of assembly, interacts with FT in phloem companion cells. The cofactor is Ca(2+). Expressed in the vascular tissues of roots, cotyledons and rosette leaves. Specifically located in the phloem including companion cells. Observed in flowers. Not detected in the shoot apical meristem.

It localises to the endoplasmic reticulum membrane. Its subcellular location is the cell junction. The protein localises to the plasmodesma. Involved in the export of FT from the phloem companion cells to the sieve elements through the plasmodesmata. Regulates flowering time under long days. May function as a signaling molecule by regulating the trafficking of other regulators. The polypeptide is FT-interacting protein 1 (Arabidopsis thaliana (Mouse-ear cress)).